A 388-amino-acid polypeptide reads, in one-letter code: Chorismate synthase (388 aa).

Residues Arg-39 and Arg-45 each contribute to the NADP(+) site. FMN contacts are provided by residues 132-134, 251-252, Gly-296, 311-315, and Arg-337; these read RSS, NA, and KPIPT.

This sequence belongs to the chorismate synthase family. As to quaternary structure, homotetramer. Requires FMNH2 as cofactor.

It catalyses the reaction 5-O-(1-carboxyvinyl)-3-phosphoshikimate = chorismate + phosphate. Its pathway is metabolic intermediate biosynthesis; chorismate biosynthesis; chorismate from D-erythrose 4-phosphate and phosphoenolpyruvate: step 7/7. Functionally, catalyzes the anti-1,4-elimination of the C-3 phosphate and the C-6 proR hydrogen from 5-enolpyruvylshikimate-3-phosphate (EPSP) to yield chorismate, which is the branch point compound that serves as the starting substrate for the three terminal pathways of aromatic amino acid biosynthesis. This reaction introduces a second double bond into the aromatic ring system. The protein is Chorismate synthase of Staphylococcus aureus (strain COL).